An 85-amino-acid polypeptide reads, in one-letter code: Beta-insect depressant toxin Lqh-dprIT3e (85 aa).

The first 21 residues, 1-21 (MKLLLLLTISASMLIEGLVNA), serve as a signal peptide directing secretion. The LCN-type CS-alpha/beta domain occupies 22–82 (DGYIRGGDGC…EWDYETDTCG (61 aa)). 4 disulfides stabilise this stretch: C31-C81, C35-C56, C42-C63, and C46-C65. Glycine amide is present on G82.

It belongs to the long (4 C-C) scorpion toxin superfamily. Sodium channel inhibitor family. Beta subfamily. As to expression, expressed by the venom gland.

Its subcellular location is the secreted. Functionally, depressant insect beta-toxins cause a transient contraction paralysis followed by a slow flaccid paralysis. They bind voltage-independently at site-4 of sodium channels (Nav) and block action potentials, primarily by depolarizing the axonal membrane and suppressing the sodium current. This depressant toxin is active only on insects. It is found in a relatively small amount in the venom. This is Beta-insect depressant toxin Lqh-dprIT3e from Leiurus hebraeus (Hebrew deathstalker scorpion).